The following is a 511-amino-acid chain: Coatomer subunit delta (511 aa).

Residues 168–177 (QARRDAERQG) are compositionally biased toward basic and acidic residues. The tract at residues 168–188 (QARRDAERQGKKAPGFGGFGS) is disordered. A Phosphoserine modification is found at Ser223. Residues Lys233 and Lys241 each carry the N6-acetyllysine modification. A Phosphoserine modification is found at Ser244. The MHD domain occupies 271–511 (MESVHMKIEE…TFLVDKYEIL (241 aa)). 2 positions are modified to N6-acetyllysine: Lys309 and Lys351. Ser493 carries the phosphoserine modification.

It belongs to the adaptor complexes medium subunit family. Delta-COP subfamily. Oligomeric complex that consists of at least the alpha, beta, beta', gamma, delta, epsilon and zeta subunits.

The protein resides in the cytoplasm. It is found in the golgi apparatus membrane. It localises to the cytoplasmic vesicle. Its subcellular location is the COPI-coated vesicle membrane. Its function is as follows. The coatomer is a cytosolic protein complex that binds to dilysine motifs and reversibly associates with Golgi non-clathrin-coated vesicles, which further mediate biosynthetic protein transport from the ER, via the Golgi up to the trans Golgi network. Coatomer complex is required for budding from Golgi membranes, and is essential for the retrograde Golgi-to-ER transport of dilysine-tagged proteins. In mammals, the coatomer can only be recruited by membranes associated to ADP-ribosylation factors (ARFs), which are small GTP-binding proteins; the complex also influences the Golgi structural integrity, as well as the processing, activity, and endocytic recycling of LDL receptors. This chain is Coatomer subunit delta (Arcn1), found in Mus musculus (Mouse).